Consider the following 233-residue polypeptide: Type IV secretion system protein PtlE homolog (233 aa).

Residues 42 to 62 (VAWAALAVTALSLIAIATMLP) form a helical membrane-spanning segment.

The protein belongs to the virB8 family.

The protein localises to the cell inner membrane. The chain is Type IV secretion system protein PtlE homolog (ptlE) from Bordetella bronchiseptica (strain ATCC BAA-588 / NCTC 13252 / RB50) (Alcaligenes bronchisepticus).